We begin with the raw amino-acid sequence, 105 residues long: Cell division protein FtsL (105 aa).

The Cytoplasmic segment spans residues 1 to 24; that stretch reads MAEKMEKTGQILQMQLKRFSRVEK. The helical transmembrane segment at 25 to 45 threads the bilayer; it reads AFYFSIAVTTLIVAISIIFMQ. Residues 46-105 are Extracellular-facing; it reads TKLLQVQNDLTKINAQIEEKKTELDDAKQEVNELLRAERLKEIANSHDLQLNNENIRIAE.

This sequence belongs to the FtsL family.

Its subcellular location is the cell membrane. In terms of biological role, essential cell division protein. The chain is Cell division protein FtsL from Streptococcus pneumoniae (strain ATCC BAA-255 / R6).